An 84-amino-acid chain; its full sequence is Magnetosome protein MamR (84 aa).

This sequence belongs to the magnetosome MamR family.

Its subcellular location is the magnetosome. Functionally, may play a role in controlling magnetite number and size. Coexpression of mamLQRBIEMO in a deletion of the 17 gene mamAB operon restores magnetosome vesicle formation but not magnetite biosynthesis. The polypeptide is Magnetosome protein MamR (Magnetospirillum gryphiswaldense (strain DSM 6361 / JCM 21280 / NBRC 15271 / MSR-1)).